A 156-amino-acid polypeptide reads, in one-letter code: Small ribosomal subunit protein uS11 (156 aa).

A disordered region spans residues 1–27 (MSEKEQKEVEAKESSGKAEERRETREK).

The protein belongs to the universal ribosomal protein uS11 family. As to quaternary structure, part of the 30S ribosomal subunit.

Its function is as follows. Located on the platform of the 30S subunit. The sequence is that of Small ribosomal subunit protein uS11 from Thermofilum pendens (strain DSM 2475 / Hrk 5).